Consider the following 103-residue polypeptide: Matrix Gla protein (103 aa).

Residues 1–19 (MKSLLLLSVLAALAVAALC) form the signal peptide. The residue at position 21 (Glu21) is a 4-carboxyglutamate. A phosphoserine mark is found at Ser22, Ser25, and Ser28. Positions 51–97 (RAKAQERIRELNKPPYELNREACDDYKLCERYAMVYGYNAAYNRYFR) constitute a Gla domain. Residues Glu56, Glu60, Glu67, and Glu71 each carry the 4-carboxyglutamate modification. Cysteines 73 and 79 form a disulfide.

The protein belongs to the osteocalcin/matrix Gla protein family. In terms of processing, requires vitamin K-dependent gamma-carboxylation for its function.

The protein localises to the secreted. Its function is as follows. Associates with the organic matrix of bone and cartilage. Thought to act as an inhibitor of bone formation. This Sus scrofa (Pig) protein is Matrix Gla protein (MGP).